Reading from the N-terminus, the 336-residue chain is Holliday junction branch migration complex subunit RuvB (336 aa).

Positions Ala-4 to Tyr-184 are large ATPase domain (RuvB-L). Residues Ile-23, Arg-24, Gly-65, Lys-68, Thr-69, Thr-70, Glu-131 to Tyr-133, Arg-174, Tyr-184, and Arg-221 each bind ATP. Thr-69 is a Mg(2+) binding site. A small ATPAse domain (RuvB-S) region spans residues Ser-185–Asp-255. Residues Gln-258–Lys-336 form a head domain (RuvB-H) region. Residues Arg-294, Arg-313, and Arg-318 each contribute to the DNA site.

Belongs to the RuvB family. Homohexamer. Forms an RuvA(8)-RuvB(12)-Holliday junction (HJ) complex. HJ DNA is sandwiched between 2 RuvA tetramers; dsDNA enters through RuvA and exits via RuvB. An RuvB hexamer assembles on each DNA strand where it exits the tetramer. Each RuvB hexamer is contacted by two RuvA subunits (via domain III) on 2 adjacent RuvB subunits; this complex drives branch migration. In the full resolvosome a probable DNA-RuvA(4)-RuvB(12)-RuvC(2) complex forms which resolves the HJ.

Its subcellular location is the cytoplasm. It carries out the reaction ATP + H2O = ADP + phosphate + H(+). Functionally, the RuvA-RuvB-RuvC complex processes Holliday junction (HJ) DNA during genetic recombination and DNA repair, while the RuvA-RuvB complex plays an important role in the rescue of blocked DNA replication forks via replication fork reversal (RFR). RuvA specifically binds to HJ cruciform DNA, conferring on it an open structure. The RuvB hexamer acts as an ATP-dependent pump, pulling dsDNA into and through the RuvAB complex. RuvB forms 2 homohexamers on either side of HJ DNA bound by 1 or 2 RuvA tetramers; 4 subunits per hexamer contact DNA at a time. Coordinated motions by a converter formed by DNA-disengaged RuvB subunits stimulates ATP hydrolysis and nucleotide exchange. Immobilization of the converter enables RuvB to convert the ATP-contained energy into a lever motion, pulling 2 nucleotides of DNA out of the RuvA tetramer per ATP hydrolyzed, thus driving DNA branch migration. The RuvB motors rotate together with the DNA substrate, which together with the progressing nucleotide cycle form the mechanistic basis for DNA recombination by continuous HJ branch migration. Branch migration allows RuvC to scan DNA until it finds its consensus sequence, where it cleaves and resolves cruciform DNA. The chain is Holliday junction branch migration complex subunit RuvB from Actinobacillus succinogenes (strain ATCC 55618 / DSM 22257 / CCUG 43843 / 130Z).